A 545-amino-acid polypeptide reads, in one-letter code: Glucose-6-phosphate isomerase (545 aa).

The active-site Proton donor is Glu343. Active-site residues include His374 and Lys513.

The protein belongs to the GPI family.

It is found in the cytoplasm. The enzyme catalyses alpha-D-glucose 6-phosphate = beta-D-fructose 6-phosphate. It functions in the pathway carbohydrate biosynthesis; gluconeogenesis. Its pathway is carbohydrate degradation; glycolysis; D-glyceraldehyde 3-phosphate and glycerone phosphate from D-glucose: step 2/4. Catalyzes the reversible isomerization of glucose-6-phosphate to fructose-6-phosphate. The polypeptide is Glucose-6-phosphate isomerase (Methylibium petroleiphilum (strain ATCC BAA-1232 / LMG 22953 / PM1)).